Consider the following 274-residue polypeptide: Shikimate dehydrogenase (NADP(+)) (274 aa).

Residues 14–16 (SKS) and Thr61 each bind shikimate. Catalysis depends on Lys65, which acts as the Proton acceptor. Glu77 contacts NADP(+). Residues Asn86 and Asp102 each coordinate shikimate. NADP(+) contacts are provided by residues 126–130 (GAGGA), 149–154 (NRTLEK), and Met212. Residue Tyr214 coordinates shikimate. Gly237 contacts NADP(+).

It belongs to the shikimate dehydrogenase family. As to quaternary structure, homodimer.

It carries out the reaction shikimate + NADP(+) = 3-dehydroshikimate + NADPH + H(+). It participates in metabolic intermediate biosynthesis; chorismate biosynthesis; chorismate from D-erythrose 4-phosphate and phosphoenolpyruvate: step 4/7. Functionally, involved in the biosynthesis of the chorismate, which leads to the biosynthesis of aromatic amino acids. Catalyzes the reversible NADPH linked reduction of 3-dehydroshikimate (DHSA) to yield shikimate (SA). This is Shikimate dehydrogenase (NADP(+)) from Actinobacillus pleuropneumoniae serotype 5b (strain L20).